Reading from the N-terminus, the 120-residue chain is UPF0382 membrane protein SSP2132 (120 aa).

4 helical membrane-spanning segments follow: residues 3-23 (VFIILGALNAMMAVGTGAFGA), 46-66 (MYHGLGLLAIGIISGTTSINV), 69-89 (VGWLLFFGIVFFSGSLYILAL), and 94-114 (IIGAITPIGGVLFIVGWLMLV).

Belongs to the UPF0382 family.

The protein localises to the cell membrane. The polypeptide is UPF0382 membrane protein SSP2132 (Staphylococcus saprophyticus subsp. saprophyticus (strain ATCC 15305 / DSM 20229 / NCIMB 8711 / NCTC 7292 / S-41)).